The following is a 191-amino-acid chain: Ribosome maturation factor RimP (191 aa).

This sequence belongs to the RimP family.

The protein localises to the cytoplasm. Required for maturation of 30S ribosomal subunits. The polypeptide is Ribosome maturation factor RimP (Caulobacter vibrioides (strain NA1000 / CB15N) (Caulobacter crescentus)).